Reading from the N-terminus, the 359-residue chain is Proton-gated ion channel (359 aa).

The signal sequence occupies residues Met-1–Gly-43. The Periplasmic portion of the chain corresponds to Gln-44–Gln-235. The chain crosses the membrane as a helical span at residues Tyr-236–Phe-258. Over Trp-259–Thr-261 the chain is Cytoplasmic. The chain crosses the membrane as a helical span at residues Ser-262 to Thr-286. Topologically, residues Asn-287–Met-294 are periplasmic. Residues Thr-295–Val-323 form a helical membrane-spanning segment. Over Glu-324–Gln-326 the chain is Cytoplasmic. The chain crosses the membrane as a helical span at residues Pro-327–Phe-359.

This sequence belongs to the ligand-gated ion channel (TC 1.A.9) family. As to quaternary structure, homopentamer.

Its subcellular location is the cell inner membrane. With respect to regulation, tetraethylammonium (TEA) and tetrabutylammonium (TBA) inhibit the proton-activated currents in a dose- and voltage-dependent manner in vitro, whereas the blocker of acid sensing ion channels, amiloride, has no effect. Channel current of GLIC can be inhibited by inhaled and intravenous general anesthetics at and below concentrations used clinically. Ion conduction is also inhibited by lidocaine and by divalent transition metal ions such as cadmium ions. Its function is as follows. Cationic channel with similar permeabilities for Na(+) and K(+), that is activated by an increase of the proton concentration on the extracellular side. Displays no permeability for chloride ions. Shows slow kinetics of activation, no desensitization and a single channel conductance of 8 pS. Might contribute to adaptation to external pH change. The sequence is that of Proton-gated ion channel (glvI) from Gloeobacter violaceus (strain ATCC 29082 / PCC 7421).